The following is an 89-amino-acid chain: Small ribosomal subunit protein uS14 (89 aa).

It belongs to the universal ribosomal protein uS14 family. In terms of assembly, part of the 30S ribosomal subunit. Contacts proteins S3 and S10.

In terms of biological role, binds 16S rRNA, required for the assembly of 30S particles and may also be responsible for determining the conformation of the 16S rRNA at the A site. This Aster yellows witches'-broom phytoplasma (strain AYWB) protein is Small ribosomal subunit protein uS14.